The chain runs to 829 residues: Potassium voltage-gated channel unc-103 (829 aa).

A disordered region spans residues 1–76 (MKTAVFGRDS…PRASHSSRRT (76 aa)). Over 1-123 (MKTAVFGRDS…YSPFKAVWDW (123 aa)) the chain is Cytoplasmic. Residues 46–66 (GVSGTGGGGSGGLQGAPGAGG) are compositionally biased toward gly residues. The helical transmembrane segment at 124–144 (IILLLVIYTAVFTPYVAAFLL) threads the bilayer. Residues 145 to 158 (RELQDTAKKSRFTE) are Extracellular-facing. The helical transmembrane segment at 159–179 (PLEIVDLIVDIMFIVDIIINF) threads the bilayer. The Cytoplasmic portion of the chain corresponds to 180–203 (RTTYVNENDEACQVVSDPGKIATH). Residues 204-224 (YFKGWFIIDMVAAVPFDLLLV) traverse the membrane as a helical segment. Residues 225–234 (STNSDETTTL) lie on the Extracellular side of the membrane. The chain crosses the membrane as a helical; Voltage-sensor span at residues 235-255 (IGLLKTARLLRLVRVARKLDR). At 256–261 (YSEYGA) the chain is on the cytoplasmic side. The helical transmembrane segment at 262–282 (AVLLLLMATFALIAHWLACIW) threads the bilayer. The Extracellular segment spans residues 283–327 (YAIGSAELSHKEYTWLHQLSKQLAQPYTSTNGTIPTGGPTLKSRY). Asn-313 carries an N-linked (GlcNAc...) asparagine glycan. Residues 328–348 (VTSLYFTLSTITSIGFGNVSA) constitute an intramembrane region (pore-forming). Over 349-354 (TTDSEK) the chain is Extracellular. The chain crosses the membrane as a helical span at residues 355–375 (IFTIIMMILGSLMYASVFGNV). The Cytoplasmic portion of the chain corresponds to 376-829 (SAIIQRLYSG…TPTQETDTIL (454 aa)). 458-559 (AFAGSTPGCL…ILRDDLLDVL (102 aa)) serves as a coordination point for a nucleoside 3',5'-cyclic phosphate. Positions 601–674 (SMNKDRYTTP…PLLRRSTNHH (74 aa)) are disordered. Positions 603-615 (NKDRYTTPPDGDH) are enriched in basic and acidic residues. Residues 640 to 650 (SAGSRSSSRCS) are compositionally biased toward low complexity.

The protein belongs to the potassium channel family. H (Eag) (TC 1.A.1.20) subfamily. Kv11.1/KCNH2 sub-subfamily. As to quaternary structure, the potassium channel is composed of a homo- or heterotetrameric complex. Interacts with dnj-1; dnj-1 chaperone promotes tetramerization.

The protein resides in the cell membrane. In terms of biological role, pore-forming (alpha) subunit of voltage-gated inwardly rectifying potassium channel. Channel properties are modulated by cAMP and subunit assembly. Regulates the movements of the male's copulatory spicules before and during male mating behavior. In Caenorhabditis elegans, this protein is Potassium voltage-gated channel unc-103.